The sequence spans 296 residues: Glycine--tRNA ligase alpha subunit (296 aa).

The protein belongs to the class-II aminoacyl-tRNA synthetase family. As to quaternary structure, tetramer of two alpha and two beta subunits.

Its subcellular location is the cytoplasm. The catalysed reaction is tRNA(Gly) + glycine + ATP = glycyl-tRNA(Gly) + AMP + diphosphate. This Francisella tularensis subsp. novicida (strain U112) protein is Glycine--tRNA ligase alpha subunit.